The chain runs to 119 residues: DNA-binding protein MmarC7_1157 (119 aa).

Over residues 1-12 the composition is skewed to basic and acidic residues; sequence MNPEEIRQRRLQ. The disordered stretch occupies residues 1 to 37; sequence MNPEEIRQRRLQEMQAKAQEQGAANDPEAQRQAQEQQ.

Belongs to the PDCD5 family.

This is DNA-binding protein MmarC7_1157 from Methanococcus maripaludis (strain C7 / ATCC BAA-1331).